The primary structure comprises 505 residues: Histidine ammonia-lyase (505 aa).

The segment at residues 141–143 (ASG) is a cross-link (5-imidazolinone (Ala-Gly)). S142 is modified (2,3-didehydroalanine (Ser)).

The protein belongs to the PAL/histidase family. Contains an active site 4-methylidene-imidazol-5-one (MIO), which is formed autocatalytically by cyclization and dehydration of residues Ala-Ser-Gly.

The protein localises to the cytoplasm. It catalyses the reaction L-histidine = trans-urocanate + NH4(+). Its pathway is amino-acid degradation; L-histidine degradation into L-glutamate; N-formimidoyl-L-glutamate from L-histidine: step 1/3. The polypeptide is Histidine ammonia-lyase (Bacillus cereus (strain 03BB102)).